A 354-amino-acid chain; its full sequence is NAD-dependent protein deacetylase hst2-2 (354 aa).

Positions 16-279 constitute a Deacetylase sirtuin-type domain; that stretch reads QCQNQTTLDS…REVARHLGWD (264 aa). NAD(+)-binding positions include 43–63 and 126–129; these read GAGL…TGLY and QNID. The active-site Proton acceptor is the His-146. Zn(2+)-binding residues include Cys-154, Cys-157, Cys-178, and Cys-183. Residues 220–222, 245–247, and Cys-265 contribute to the NAD(+) site; these read GTS and NRE.

The protein belongs to the sirtuin family. Class I subfamily. Zn(2+) is required as a cofactor.

It localises to the nucleus. It carries out the reaction N(6)-acetyl-L-lysyl-[protein] + NAD(+) + H2O = 2''-O-acetyl-ADP-D-ribose + nicotinamide + L-lysyl-[protein]. In terms of biological role, NAD-dependent histone deacetylase, which could function in telomeric silencing, cell cycle progression and chromosome stability. The protein is NAD-dependent protein deacetylase hst2-2 of Emericella nidulans (strain FGSC A4 / ATCC 38163 / CBS 112.46 / NRRL 194 / M139) (Aspergillus nidulans).